The chain runs to 104 residues: NADH-quinone oxidoreductase subunit K (104 aa).

3 helical membrane passes run 4–24 (VPAS…LFGA), 31–51 (VIVL…FVAF), and 67–87 (LFTM…LIAL).

The protein belongs to the complex I subunit 4L family. NDH-1 is composed of 14 different subunits. Subunits NuoA, H, J, K, L, M, N constitute the membrane sector of the complex.

The protein localises to the cell membrane. The catalysed reaction is a quinone + NADH + 5 H(+)(in) = a quinol + NAD(+) + 4 H(+)(out). Functionally, NDH-1 shuttles electrons from NADH, via FMN and iron-sulfur (Fe-S) centers, to quinones in the respiratory chain. The immediate electron acceptor for the enzyme in this species is believed to be a menaquinone. Couples the redox reaction to proton translocation (for every two electrons transferred, four hydrogen ions are translocated across the cytoplasmic membrane), and thus conserves the redox energy in a proton gradient. The protein is NADH-quinone oxidoreductase subunit K of Bacillus anthracis (strain A0248).